The sequence spans 431 residues: 23S rRNA (uracil(1939)-C(5))-methyltransferase RlmD (431 aa).

A TRAM domain is found at 10 to 68 (RVTTRQIITVKVNDLDSFGQGVARHNGKALFIPGLLPEESAEVIITEDKKQFARARVSR). 4 residues coordinate [4Fe-4S] cluster: C81, C87, C90, and C161. 6 residues coordinate S-adenosyl-L-methionine: Q264, F293, N298, E314, N341, and D362. Residue C388 is the Nucleophile of the active site.

It belongs to the class I-like SAM-binding methyltransferase superfamily. RNA M5U methyltransferase family. RlmD subfamily.

It catalyses the reaction uridine(1939) in 23S rRNA + S-adenosyl-L-methionine = 5-methyluridine(1939) in 23S rRNA + S-adenosyl-L-homocysteine + H(+). Its function is as follows. Catalyzes the formation of 5-methyl-uridine at position 1939 (m5U1939) in 23S rRNA. The polypeptide is 23S rRNA (uracil(1939)-C(5))-methyltransferase RlmD (Salmonella typhi).